A 214-amino-acid chain; its full sequence is Thiamine-phosphate synthase (214 aa).

Residues glutamine 38–lysine 42 and asparagine 70 contribute to the 4-amino-2-methyl-5-(diphosphooxymethyl)pyrimidine site. Residues aspartate 71 and aspartate 90 each coordinate Mg(2+). Serine 109 and lysine 138 together coordinate 4-amino-2-methyl-5-(diphosphooxymethyl)pyrimidine. Glycine 165 is a binding site for 2-[(2R,5Z)-2-carboxy-4-methylthiazol-5(2H)-ylidene]ethyl phosphate.

The protein belongs to the thiamine-phosphate synthase family. The cofactor is Mg(2+).

The catalysed reaction is 2-[(2R,5Z)-2-carboxy-4-methylthiazol-5(2H)-ylidene]ethyl phosphate + 4-amino-2-methyl-5-(diphosphooxymethyl)pyrimidine + 2 H(+) = thiamine phosphate + CO2 + diphosphate. The enzyme catalyses 2-(2-carboxy-4-methylthiazol-5-yl)ethyl phosphate + 4-amino-2-methyl-5-(diphosphooxymethyl)pyrimidine + 2 H(+) = thiamine phosphate + CO2 + diphosphate. It catalyses the reaction 4-methyl-5-(2-phosphooxyethyl)-thiazole + 4-amino-2-methyl-5-(diphosphooxymethyl)pyrimidine + H(+) = thiamine phosphate + diphosphate. The protein operates within cofactor biosynthesis; thiamine diphosphate biosynthesis; thiamine phosphate from 4-amino-2-methyl-5-diphosphomethylpyrimidine and 4-methyl-5-(2-phosphoethyl)-thiazole: step 1/1. Its function is as follows. Condenses 4-methyl-5-(beta-hydroxyethyl)thiazole monophosphate (THZ-P) and 2-methyl-4-amino-5-hydroxymethyl pyrimidine pyrophosphate (HMP-PP) to form thiamine monophosphate (TMP). The polypeptide is Thiamine-phosphate synthase (Caldanaerobacter subterraneus subsp. tengcongensis (strain DSM 15242 / JCM 11007 / NBRC 100824 / MB4) (Thermoanaerobacter tengcongensis)).